A 173-amino-acid polypeptide reads, in one-letter code: uncharacterized protein (173 aa).

The next 4 membrane-spanning stretches (helical) occupy residues 9–29 (FSIC…LLCV), 32–52 (ICSA…TFFH), 100–120 (MFLC…SFIV), and 127–147 (FLFL…GLYP).

The protein resides in the membrane. This is an uncharacterized protein from Saccharomyces cerevisiae (strain ATCC 204508 / S288c) (Baker's yeast).